A 511-amino-acid chain; its full sequence is 2,3-bisphosphoglycerate-independent phosphoglycerate mutase (511 aa).

Aspartate 14 and serine 64 together coordinate Mn(2+). Catalysis depends on serine 64, which acts as the Phosphoserine intermediate. Residues histidine 125, 155–156, arginine 187, arginine 193, 259–262, and lysine 333 each bind substrate; these read RD and RADR. Residues aspartate 400, histidine 404, aspartate 441, histidine 442, and histidine 460 each contribute to the Mn(2+) site.

This sequence belongs to the BPG-independent phosphoglycerate mutase family. In terms of assembly, monomer. The cofactor is Mn(2+).

It catalyses the reaction (2R)-2-phosphoglycerate = (2R)-3-phosphoglycerate. It functions in the pathway carbohydrate degradation; glycolysis; pyruvate from D-glyceraldehyde 3-phosphate: step 3/5. Functionally, catalyzes the interconversion of 2-phosphoglycerate and 3-phosphoglycerate. This is 2,3-bisphosphoglycerate-independent phosphoglycerate mutase from Pseudomonas putida (strain ATCC 47054 / DSM 6125 / CFBP 8728 / NCIMB 11950 / KT2440).